Here is a 576-residue protein sequence, read N- to C-terminus: MAGUK p55 subfamily member 7 (576 aa).

L27 domains follow at residues 10-63 and 65-122; these read SDTG…YEKE and PMPV…YDPV. Residues 139–220 enclose the PDZ domain; that stretch reads IIRLVKNREP…AITFKIIPSI (82 aa). The region spanning 228–298 is the SH3 domain; the sequence is DGKMFVKALF…PSKQFQERRF (71 aa). The 193-residue stretch at 368–560 folds into the Guanylate kinase-like domain; that stretch reads YRLVILVGPV…AYNELRSTLE (193 aa).

Belongs to the MAGUK family.

The protein localises to the membrane. It localises to the cell junction. Its subcellular location is the tight junction. It is found in the adherens junction. Acts as an important adapter that promotes epithelial cell polarity and tight junction formation. Involved in the assembly of protein complexes at sites of cell-cell contact. The sequence is that of MAGUK p55 subfamily member 7 (mpp7) from Xenopus tropicalis (Western clawed frog).